A 298-amino-acid chain; its full sequence is Interferon-inducible double-stranded RNA-dependent protein kinase activator A homolog B (298 aa).

3 DRBM domains span residues Thr-20–Gly-87, Asn-112–Thr-180, and Asp-225–Ile-293.

It belongs to the PRKRA family. As to quaternary structure, homodimer. Interacts with dicer1 and eif2ak2/pkr. Also able to interact with dsRNA. Associates with ribosomes. As to expression, expressed in brain, heart, kidney, liver, nerve and spleen.

It localises to the cytoplasm. Its subcellular location is the perinuclear region. The protein resides in the nucleus. It is found in the nucleolus. Functionally, activates eif2ak2/pkr in the absence of double-stranded RNA (dsRNA), leading to phosphorylation of eif2s1/efi2-alpha and inhibition of translation and induction of apoptosis. Required for siRNA production by dicer1 and for subsequent siRNA-mediated post-transcriptional gene silencing. Does not seem to be required for processing of pre-miRNA to miRNA by dicer1. The polypeptide is Interferon-inducible double-stranded RNA-dependent protein kinase activator A homolog B (prkra-b) (Xenopus laevis (African clawed frog)).